The following is a 134-amino-acid chain: Transmembrane protein 100 (134 aa).

A Phosphoserine modification is found at Ser15. A run of 2 helical transmembrane segments spans residues 56 to 76 and 84 to 104; these read CVIP…AVAY and IISI…ASSA. Phosphoserine is present on Ser121.

In terms of assembly, interacts (via C-terminus) with TRPA1 and TRPV1. Interacts with TASOR.

The protein localises to the cell membrane. Its subcellular location is the membrane. It is found in the perikaryon. It localises to the cytoplasm. The protein resides in the perinuclear region. The protein localises to the endoplasmic reticulum. Plays a role during embryonic arterial endothelium differentiation and vascular morphogenesis through the ACVRL1 receptor-dependent signaling pathway upon stimulation by bone morphogenetic proteins, such as GDF2/BMP9 and BMP10. Involved in the regulation of nociception, acting as a modulator of the interaction between TRPA1 and TRPV1, two molecular sensors and mediators of pain signals in dorsal root ganglia (DRG) neurons. Mechanistically, it weakens their interaction, thereby releasing the inhibition of TRPA1 by TRPV1 and increasing the single-channel open probability of the TRPA1-TRPV1 complex. This chain is Transmembrane protein 100 (TMEM100), found in Bos taurus (Bovine).